A 268-amino-acid chain; its full sequence is Endonuclease 8 1 (268 aa).

P2 (schiff-base intermediate with DNA) is an active-site residue. Residue E3 is the Proton donor of the active site. K52 acts as the Proton donor; for beta-elimination activity in catalysis. DNA is bound by residues R125 and N166. Residues 234–268 form an FPG-type zinc finger; that stretch reads YVYRRAGEPCRVCGGVIRTALLEGRNVFWCPVCQT. Catalysis depends on R258, which acts as the Proton donor; for delta-elimination activity.

This sequence belongs to the FPG family. Zn(2+) is required as a cofactor.

The enzyme catalyses 2'-deoxyribonucleotide-(2'-deoxyribose 5'-phosphate)-2'-deoxyribonucleotide-DNA = a 3'-end 2'-deoxyribonucleotide-(2,3-dehydro-2,3-deoxyribose 5'-phosphate)-DNA + a 5'-end 5'-phospho-2'-deoxyribonucleoside-DNA + H(+). Functionally, involved in base excision repair of DNA damaged by oxidation or by mutagenic agents. Acts as a DNA glycosylase that recognizes and removes damaged bases. Has AP (apurinic/apyrimidinic) lyase activity and introduces nicks in the DNA strand. Cleaves the DNA backbone by beta-delta elimination to generate a single-strand break at the site of the removed base with both 3'- and 5'-phosphates. The chain is Endonuclease 8 1 (nei1) from Mycobacterium bovis (strain ATCC BAA-935 / AF2122/97).